The sequence spans 427 residues: Enolase (427 aa).

A (2R)-2-phosphoglycerate-binding site is contributed by Q162. E206 functions as the Proton donor in the catalytic mechanism. 3 residues coordinate Mg(2+): D243, E286, and D313. Positions 338, 367, 368, and 389 each coordinate (2R)-2-phosphoglycerate. The active-site Proton acceptor is K338.

Belongs to the enolase family. Requires Mg(2+) as cofactor.

The protein localises to the cytoplasm. Its subcellular location is the secreted. The protein resides in the cell surface. The catalysed reaction is (2R)-2-phosphoglycerate = phosphoenolpyruvate + H2O. Its pathway is carbohydrate degradation; glycolysis; pyruvate from D-glyceraldehyde 3-phosphate: step 4/5. In terms of biological role, catalyzes the reversible conversion of 2-phosphoglycerate (2-PG) into phosphoenolpyruvate (PEP). It is essential for the degradation of carbohydrates via glycolysis. The protein is Enolase of Methanopyrus kandleri (strain AV19 / DSM 6324 / JCM 9639 / NBRC 100938).